Reading from the N-terminus, the 500-residue chain is Glycerol kinase (500 aa).

Threonine 17 serves as a coordination point for ADP. The ATP site is built by threonine 17, threonine 18, and serine 19. Threonine 17 is a sn-glycerol 3-phosphate binding site. Arginine 21 serves as a coordination point for ADP. The sn-glycerol 3-phosphate site is built by arginine 87, glutamate 88, tyrosine 139, and aspartate 243. Glycerol contacts are provided by arginine 87, glutamate 88, tyrosine 139, aspartate 243, and glutamine 244. The ADP site is built by threonine 265 and glycine 308. ATP is bound by residues threonine 265, glycine 308, glutamine 312, and glycine 409. The ADP site is built by glycine 409 and asparagine 413.

Belongs to the FGGY kinase family.

The enzyme catalyses glycerol + ATP = sn-glycerol 3-phosphate + ADP + H(+). The protein operates within polyol metabolism; glycerol degradation via glycerol kinase pathway; sn-glycerol 3-phosphate from glycerol: step 1/1. Inhibited by fructose 1,6-bisphosphate (FBP). Key enzyme in the regulation of glycerol uptake and metabolism. Catalyzes the phosphorylation of glycerol to yield sn-glycerol 3-phosphate. This is Glycerol kinase from Pseudomonas fluorescens (strain Pf0-1).